A 919-amino-acid polypeptide reads, in one-letter code: Coiled-coil domain-containing protein 66 (919 aa).

Disordered regions lie at residues 145 to 166, 456 to 505, 724 to 744, and 762 to 816; these read KEET…KDEN, ERDR…RERE, ERNN…LPSP, and LKSD…EPSH. The segment covering 150–161 has biased composition (polar residues); sequence QDSLHLNNTSNQ. A coiled-coil region spans residues 467–558; that stretch reads HQKAITAQVE…EQRIRELAQK (92 aa). Residues 570 to 919 are mediates localization to cilia, centrosomes and spindle microtubules and the interaction with PCM1, CEP290, CEP104 and CSPP1; sequence GGYGLDDVSG…NQEENFNSSF (350 aa).

Homodimer; disulfide-linked. Interacts with CEP290. Interacts with PCM1. Interacts with ARMC9, TOGARAM1, CSPP1 and CEP104. Interacts with CDK5RAP2, CEP152, CEP192, TBG1 and PRC1. In terms of tissue distribution, expressed in retina and blood. Expressed in retina, mainly in photoreceptors but also in outer plexiform and ganglion cell layers (at protein level).

The protein localises to the cytoplasm. It localises to the cytoskeleton. It is found in the microtubule organizing center. The protein resides in the centrosome. Its subcellular location is the centriolar satellite. The protein localises to the cell projection. It localises to the cilium. It is found in the cilium basal body. The protein resides in the cilium axoneme. Its subcellular location is the photoreceptor inner segment. The protein localises to the photoreceptor outer segment. Microtubule-binding protein required for ciliogenesis. May function in ciliogenesis by mediating the transport of proteins like BBS4 to the cilium, but also through the organization of the centriolar satellites. Required for the assembly of signaling-competent cilia with proper structure and length. Mediates this function in part by regulating transition zone assembly and basal body recruitment of the IFT-B complex. Cooperates with the ciliopathy proteins CSPP1 and CEP104 during cilium length regulation. Plays two important roles during cell division. First, is required for mitotic progression via regulation of spindle assembly, organization and orientation, levels of spindle microtubules (MTs), kinetochore-fiber integrity, and chromosome alignment. Second, functions during cytokinesis in part by regulating assembly and organization of central spindle and midbody MTs. Plays a role in retina morphogenesis and/or homeostasis. This is Coiled-coil domain-containing protein 66 (CCDC66) from Canis lupus familiaris (Dog).